Reading from the N-terminus, the 118-residue chain is Holo-[acyl-carrier-protein] synthase (118 aa).

Asp5 and Glu51 together coordinate Mg(2+).

This sequence belongs to the P-Pant transferase superfamily. AcpS family. The cofactor is Mg(2+).

Its subcellular location is the cytoplasm. The catalysed reaction is apo-[ACP] + CoA = holo-[ACP] + adenosine 3',5'-bisphosphate + H(+). Its function is as follows. Transfers the 4'-phosphopantetheine moiety from coenzyme A to a Ser of acyl-carrier-protein. This is Holo-[acyl-carrier-protein] synthase from Helicobacter pylori (strain P12).